Here is a 349-residue protein sequence, read N- to C-terminus: Small ribosomal subunit biogenesis GTPase RsgA (349 aa).

Basic residues predominate over residues 1 to 11 (MSKKKLSKGQQ). Positions 1 to 35 (MSKKKLSKGQQRRVSANHQRRLKHADSKVEWDDSQ) are disordered. The region spanning 111 to 272 (YDGLKPIAAN…VIDSPGVREF (162 aa)) is the CP-type G domain. GTP-binding positions include 158–161 (NKID) and 212–220 (GQSGVGKSS). Zn(2+) contacts are provided by Cys296, Cys301, His303, and Cys309.

Belongs to the TRAFAC class YlqF/YawG GTPase family. RsgA subfamily. As to quaternary structure, monomer. Associates with 30S ribosomal subunit, binds 16S rRNA. The cofactor is Zn(2+).

The protein localises to the cytoplasm. Its function is as follows. One of several proteins that assist in the late maturation steps of the functional core of the 30S ribosomal subunit. Helps release RbfA from mature subunits. May play a role in the assembly of ribosomal proteins into the subunit. Circularly permuted GTPase that catalyzes slow GTP hydrolysis, GTPase activity is stimulated by the 30S ribosomal subunit. The protein is Small ribosomal subunit biogenesis GTPase RsgA of Dickeya dadantii (strain 3937) (Erwinia chrysanthemi (strain 3937)).